The sequence spans 646 residues: ATP-dependent zinc metalloprotease FtsH (646 aa).

Topologically, residues 1–4 (MTRS) are cytoplasmic. A helical transmembrane segment spans residues 5-25 (LLWQMVIVLGAILMVNYVLTT). Topologically, residues 26-120 (LTPQTQEPVV…VRPESKPSPW (95 aa)) are periplasmic. Residues 121-141 (ATAMIYMLPWLLIVGVWWFVI) traverse the membrane as a helical segment. Residues 142-646 (KGMRTRQGPG…GELAGGAVEG (505 aa)) lie on the Cytoplasmic side of the membrane. 216 to 223 (GPPGTGKT) contributes to the ATP binding site. Residue histidine 437 participates in Zn(2+) binding. Glutamate 438 is an active-site residue. Zn(2+) contacts are provided by histidine 441 and aspartate 513.

In the central section; belongs to the AAA ATPase family. The protein in the C-terminal section; belongs to the peptidase M41 family. Homohexamer. It depends on Zn(2+) as a cofactor.

The protein resides in the cell inner membrane. Acts as a processive, ATP-dependent zinc metallopeptidase for both cytoplasmic and membrane proteins. Plays a role in the quality control of integral membrane proteins. The protein is ATP-dependent zinc metalloprotease FtsH of Syntrophotalea carbinolica (strain DSM 2380 / NBRC 103641 / GraBd1) (Pelobacter carbinolicus).